A 365-amino-acid polypeptide reads, in one-letter code: Aminomethyltransferase (365 aa).

Belongs to the GcvT family. As to quaternary structure, the glycine cleavage system is composed of four proteins: P, T, L and H.

It catalyses the reaction N(6)-[(R)-S(8)-aminomethyldihydrolipoyl]-L-lysyl-[protein] + (6S)-5,6,7,8-tetrahydrofolate = N(6)-[(R)-dihydrolipoyl]-L-lysyl-[protein] + (6R)-5,10-methylene-5,6,7,8-tetrahydrofolate + NH4(+). The glycine cleavage system catalyzes the degradation of glycine. This chain is Aminomethyltransferase, found in Parafrankia sp. (strain EAN1pec).